The chain runs to 406 residues: MRRVSVSDPLPFSAPLAAGGEALSTSALPAGVRDVLPAEWERREHLRSHLSALLRSWGYRGVDLPALELADPAHPQGNHAFKLIDSGGQVLALRSEYTTALGRLVGTHFPSGPFPLRLQYGGRLWLRTQTSELGRLREFNQVGAELIGVTGVQADAELLALAHAALGQAGVQAQLEVGFPGFVDAALTDAGLPGPVRAALHDAIDRKSGADLDLLARQHGVSPEVTRTLHSLTELYGGPEVLTEARVLARGVRAEQAVEHLSAVHAAAQEAGVELLFDLGVSRRYGYYTGLTFRAYVDGINQPVLGGGRYALPGGLPGAGFAIGLERLAAVMPAGVPSEPETVLALDFAAATAARAAGLGAELAWTGDEAELRHYAQARGLRRWVQGAELRDVTPADLKIATEVNA.

Belongs to the class-II aminoacyl-tRNA synthetase family. HisZ subfamily. In terms of assembly, heteromultimer composed of HisG and HisZ subunits.

Its subcellular location is the cytoplasm. The protein operates within amino-acid biosynthesis; L-histidine biosynthesis; L-histidine from 5-phospho-alpha-D-ribose 1-diphosphate: step 1/9. Required for the first step of histidine biosynthesis. May allow the feedback regulation of ATP phosphoribosyltransferase activity by histidine. The polypeptide is ATP phosphoribosyltransferase regulatory subunit (hisZ) (Deinococcus radiodurans (strain ATCC 13939 / DSM 20539 / JCM 16871 / CCUG 27074 / LMG 4051 / NBRC 15346 / NCIMB 9279 / VKM B-1422 / R1)).